The primary structure comprises 156 residues: Small ribosomal subunit protein uS7 (156 aa).

Belongs to the universal ribosomal protein uS7 family. In terms of assembly, part of the 30S ribosomal subunit. Contacts proteins S9 and S11.

One of the primary rRNA binding proteins, it binds directly to 16S rRNA where it nucleates assembly of the head domain of the 30S subunit. Is located at the subunit interface close to the decoding center, probably blocks exit of the E-site tRNA. The protein is Small ribosomal subunit protein uS7 of Shewanella piezotolerans (strain WP3 / JCM 13877).